The primary structure comprises 152 residues: Large ribosomal subunit protein bL9 (152 aa).

The protein belongs to the bacterial ribosomal protein bL9 family.

Its function is as follows. Binds to the 23S rRNA. This is Large ribosomal subunit protein bL9 from Mycoplasmopsis synoviae (strain 53) (Mycoplasma synoviae).